The primary structure comprises 1578 residues: Pentafunctional AROM polypeptide (1578 aa).

Positions 1 to 393 are 3-dehydroquinate synthase; sequence MSVELAKVSI…YGTSAHVVSD (393 aa). NAD(+)-binding positions include 44–46, 79–82, 110–112, and aspartate 115; these read DTN, EAHK, and GGV. Arginine 126 contacts 7-phospho-2-dehydro-3-deoxy-D-arabino-heptonate. Position 135-136 (135-136) interacts with NAD(+); the sequence is TS. Aspartate 142 and lysine 148 together coordinate 7-phospho-2-dehydro-3-deoxy-D-arabino-heptonate. Position 157 (lysine 157) interacts with NAD(+). Asparagine 158 is a 7-phospho-2-dehydro-3-deoxy-D-arabino-heptonate binding site. NAD(+) is bound by residues 175-178 and asparagine 186; that span reads WLET. Residue glutamate 190 participates in Zn(2+) binding. 7-phospho-2-dehydro-3-deoxy-D-arabino-heptonate-binding positions include 190-193 and lysine 259; that span reads EVIK. The active-site Proton acceptor; for 3-dehydroquinate synthase activity is glutamate 269. Residues 273 to 277 and histidine 280 contribute to the 7-phospho-2-dehydro-3-deoxy-D-arabino-heptonate site; that span reads RNLLN. Zn(2+) is bound at residue histidine 280. The Proton acceptor; for 3-dehydroquinate synthase activity role is filled by histidine 284. Histidine 296 and lysine 365 together coordinate 7-phospho-2-dehydro-3-deoxy-D-arabino-heptonate. Histidine 296 is a Zn(2+) binding site. The tract at residues 406 to 863 is EPSP synthase; the sequence is VHPFNNIPEG…WDVLHSQLGA (458 aa). Catalysis depends on cysteine 845, which acts as the For EPSP synthase activity. A shikimate kinase region spans residues 882–1071; it reads VVIIGMRAAG…VPSRRSAFVC (190 aa). 886-893 lines the ATP pocket; it reads GMRAAGKS. The segment at 1072-1284 is 3-dehydroquinase; the sequence is LTFEDLSDHL…AAPGQLTLAE (213 aa). Histidine 1189 (proton acceptor; for 3-dehydroquinate dehydratase activity) is an active-site residue. Lysine 1218 functions as the Schiff-base intermediate with substrate; for 3-dehydroquinate dehydratase activity in the catalytic mechanism. Residues 1297 to 1578 form a shikimate dehydrogenase region; it reads AKKFFVIGSP…KAIFDAVTQE (282 aa).

This sequence in the N-terminal section; belongs to the sugar phosphate cyclases superfamily. Dehydroquinate synthase family. In the 2nd section; belongs to the EPSP synthase family. It in the 3rd section; belongs to the shikimate kinase family. The protein in the 4th section; belongs to the type-I 3-dehydroquinase family. This sequence in the C-terminal section; belongs to the shikimate dehydrogenase family. Homodimer. It depends on Zn(2+) as a cofactor.

The protein localises to the cytoplasm. The catalysed reaction is 7-phospho-2-dehydro-3-deoxy-D-arabino-heptonate = 3-dehydroquinate + phosphate. It catalyses the reaction 3-dehydroquinate = 3-dehydroshikimate + H2O. The enzyme catalyses shikimate + NADP(+) = 3-dehydroshikimate + NADPH + H(+). It carries out the reaction shikimate + ATP = 3-phosphoshikimate + ADP + H(+). The catalysed reaction is 3-phosphoshikimate + phosphoenolpyruvate = 5-O-(1-carboxyvinyl)-3-phosphoshikimate + phosphate. It functions in the pathway metabolic intermediate biosynthesis; chorismate biosynthesis; chorismate from D-erythrose 4-phosphate and phosphoenolpyruvate: step 2/7. Its pathway is metabolic intermediate biosynthesis; chorismate biosynthesis; chorismate from D-erythrose 4-phosphate and phosphoenolpyruvate: step 3/7. The protein operates within metabolic intermediate biosynthesis; chorismate biosynthesis; chorismate from D-erythrose 4-phosphate and phosphoenolpyruvate: step 4/7. It participates in metabolic intermediate biosynthesis; chorismate biosynthesis; chorismate from D-erythrose 4-phosphate and phosphoenolpyruvate: step 5/7. It functions in the pathway metabolic intermediate biosynthesis; chorismate biosynthesis; chorismate from D-erythrose 4-phosphate and phosphoenolpyruvate: step 6/7. The AROM polypeptide catalyzes 5 consecutive enzymatic reactions in prechorismate polyaromatic amino acid biosynthesis. This chain is Pentafunctional AROM polypeptide, found in Kluyveromyces lactis (strain ATCC 8585 / CBS 2359 / DSM 70799 / NBRC 1267 / NRRL Y-1140 / WM37) (Yeast).